The primary structure comprises 78 residues: Protein SlyX homolog (78 aa).

It belongs to the SlyX family.

In Xylella fastidiosa (strain 9a5c), this protein is Protein SlyX homolog.